A 245-amino-acid polypeptide reads, in one-letter code: 14-3-3 protein zeta (245 aa).

The protein belongs to the 14-3-3 family. As to quaternary structure, homodimer. Present in all adult tissues examined with the highest levels in the brain.

The protein localises to the cytoplasm. Adapter protein implicated in the regulation of a large spectrum of both general and specialized signaling pathways. Binds to a large number of partners, usually by recognition of a phosphoserine or phosphothreonine motif. Binding generally results in the modulation of the activity of the binding partner. The sequence is that of 14-3-3 protein zeta (ywhaz) from Xenopus laevis (African clawed frog).